The chain runs to 337 residues: Peroxidase 14 (337 aa).

Positions 1 to 22 (MARIGSFLILLSLTYALTLCIC) are cleaved as a signal peptide. An N-linked (GlcNAc...) asparagine glycan is attached at asparagine 24. Cystine bridges form between cysteine 44–cysteine 124, cysteine 77–cysteine 82, cysteine 130–cysteine 331, and cysteine 209–cysteine 241. Histidine 75 functions as the Proton acceptor in the catalytic mechanism. Aspartate 76, valine 79, glycine 81, aspartate 83, and serine 85 together coordinate Ca(2+). Proline 172 contacts substrate. Asparagine 191 is a glycosylation site (N-linked (GlcNAc...) asparagine). Heme b is bound at residue histidine 202. Threonine 203 is a binding site for Ca(2+). 2 N-linked (GlcNAc...) asparagine glycosylation sites follow: asparagine 218 and asparagine 249. Ca(2+) contacts are provided by aspartate 254, serine 257, and aspartate 262.

This sequence belongs to the peroxidase family. Classical plant (class III) peroxidase subfamily. Heme b serves as cofactor. The cofactor is Ca(2+).

It localises to the secreted. The catalysed reaction is 2 a phenolic donor + H2O2 = 2 a phenolic radical donor + 2 H2O. In terms of biological role, removal of H(2)O(2), oxidation of toxic reductants, biosynthesis and degradation of lignin, suberization, auxin catabolism, response to environmental stresses such as wounding, pathogen attack and oxidative stress. These functions might be dependent on each isozyme/isoform in each plant tissue. This is Peroxidase 14 (PER14) from Arabidopsis thaliana (Mouse-ear cress).